A 604-amino-acid chain; its full sequence is Procollagen galactosyltransferase 1 (604 aa).

The first 18 residues, 1-18, serve as a signal peptide directing secretion; it reads MHLLCFFFLLLWTGPARS. Asn-78, Asn-166, Asn-363, and Asn-561 each carry an N-linked (GlcNAc...) asparagine glycan. Positions 570-580 are enriched in basic and acidic residues; the sequence is RARSRKSREQE. The disordered stretch occupies residues 570–604; it reads RARSRKSREQEELSSEAQNTDVLQSPLDSTARDEL. Polar residues predominate over residues 584-597; it reads SEAQNTDVLQSPLD. Residues 601–604 carry the Prevents secretion from ER motif; it reads RDEL.

Belongs to the glycosyltransferase 25 family.

The protein resides in the endoplasmic reticulum lumen. The enzyme catalyses (5R)-5-hydroxy-L-lysyl-[collagen] + UDP-alpha-D-galactose = (5R)-5-O-(beta-D-galactosyl)-5-hydroxy-L-lysyl-[collagen] + UDP + H(+). Beta-galactosyltransferase that transfers beta-galactose to hydroxylysine residues of type I collagen. By acting on collagen glycosylation, facilitates the formation of collagen triple helix. The polypeptide is Procollagen galactosyltransferase 1 (colgalt1) (Danio rerio (Zebrafish)).